The chain runs to 85 residues: Exodeoxyribonuclease 7 small subunit (85 aa).

The tract at residues 66–85 is disordered; it reads SGEGEEVPLDTPDAEDGDGE. Over residues 68–85 the composition is skewed to acidic residues; that stretch reads EGEEVPLDTPDAEDGDGE.

It belongs to the XseB family. Heterooligomer composed of large and small subunits.

The protein localises to the cytoplasm. It catalyses the reaction Exonucleolytic cleavage in either 5'- to 3'- or 3'- to 5'-direction to yield nucleoside 5'-phosphates.. Its function is as follows. Bidirectionally degrades single-stranded DNA into large acid-insoluble oligonucleotides, which are then degraded further into small acid-soluble oligonucleotides. This is Exodeoxyribonuclease 7 small subunit from Thioalkalivibrio sulfidiphilus (strain HL-EbGR7).